The chain runs to 65 residues: Small ribosomal subunit protein eS17 (65 aa).

The protein belongs to the eukaryotic ribosomal protein eS17 family.

The sequence is that of Small ribosomal subunit protein eS17 from Methanocella arvoryzae (strain DSM 22066 / NBRC 105507 / MRE50).